Reading from the N-terminus, the 311-residue chain is tRNA (cytosine(49)-C(5))-methyltransferase (311 aa).

S-adenosyl-L-methionine is bound by residues 118-124 (AAAPGSK), Asp-142, Asp-169, and Asp-186. Residue Cys-239 is the Nucleophile of the active site.

The protein belongs to the class I-like SAM-binding methyltransferase superfamily. RsmB/NOP family. In terms of assembly, forms a tripartite complex with archease and tRNA. Binds only the oligomeric forms of the archease.

The protein localises to the cytoplasm. The enzyme catalyses cytidine(49) in tRNA precursor + S-adenosyl-L-methionine = 5-methylcytidine(49) in tRNA precursor + S-adenosyl-L-homocysteine + H(+). With respect to regulation, substrate specificity and tendency to aggregate are influenced by archease. Functionally, catalyzes AdoMet-dependent formation of m5C in tRNA. In the presence of protein archease, specifically methylates the cytosine at position 49 (m5C49) of tRNA. In the absence of archease, catalyzes the formation of m5C at many locations in tRNAs or rRNAs. The sequence is that of tRNA (cytosine(49)-C(5))-methyltransferase from Pyrococcus abyssi (strain GE5 / Orsay).